A 740-amino-acid polypeptide reads, in one-letter code: Arf-GAP with coiled-coil, ANK repeat and PH domain-containing protein 1 (740 aa).

Positions 1-226 (MTVKLDFEEC…RKELGTQLHN (226 aa)) constitute a BAR domain. Residues 1-382 (MTVKLDFEEC…RGPGQVSGYH (382 aa)) are required for formation of endosomal tubules when overexpressed with PIP5K1C. The PH domain maps to 265–360 (GLVMEGHLFK…WVSAVQSSIA (96 aa)). Residues 405-527 (GQVAAQVQSV…KFLTKLPEIR (123 aa)) enclose the Arf-GAP domain. The tract at residues 405-740 (GQVAAQVQSV…SRRSHDLHTL (336 aa)) is required for interaction with GULP1. The C4-type zinc-finger motif lies at 420–443 (CCDCREPAPEWASINLGVTLCIQC). Tyrosine 485 carries the post-translational modification 3'-nitrotyrosine. Positions 525-562 (EIRGRRGGRGPPRGHPPVPPKPPIRPHSGIVRSKSECP) are disordered. Residues 525 to 566 (EIRGRRGGRGPPRGHPPVPPKPPIRPHSGIVRSKSECPSDDM) are prevents interaction with ITGB1 when S-554 is not phosphorylated. Positions 537–549 (RGHPPVPPKPPIR) are enriched in pro residues. ANK repeat units follow at residues 606–635 (GNATPLIRATAANSLLACEFLLQNGANVNQ), 639–668 (AGRGPLHHATILGHTGLACLFLKRGADLGA), and 672–702 (EGRDPLTIAMETTNADIVTLLRLAKMREAEA).

Banana-shaped homodimer laterally assembling into tetramers, the tetramers further pack helically onto the membrane. Interacts with GTP-bound ARF6. Interacts with third cytoplasmic loop of SLC2A4/GLUT4. Interacts with CLTC. Interacts with GULP1. Forms a complex with GDP-bound ARF6 and GULP1. Interacts with ITGB1; required for ITGB1 recycling.

It localises to the recycling endosome membrane. With respect to regulation, GAP activity stimulated by phosphatidylinositol 4,5-bisphosphate (PIP2) and phosphatidic acid. In terms of biological role, GTPase-activating protein (GAP) for ADP ribosylation factor 6 (ARF6) required for clathrin-dependent export of proteins from recycling endosomes to trans-Golgi network and cell surface. Required for regulated export of ITGB1 from recycling endosomes to the cell surface and ITGB1-dependent cell migration. This Mus musculus (Mouse) protein is Arf-GAP with coiled-coil, ANK repeat and PH domain-containing protein 1 (Acap1).